Here is a 362-residue protein sequence, read N- to C-terminus: MNDYTQQLQGKKDYLKTLFAGLDVPEWEVYESPDKHYRMRAEFRIWHEGGEMFYAMFEKGQKASGASMIRCDRFEAASEAVNRLMPELIAAAAQSPELKKRWYAVEFLSTLSGEMLVTMIYHKRLDAEWMQAAQALQQQLDISVIGRSRGQKIVLKQDYVTETLKVGNRDFRYRQIEGSFTQPNAAVCQKMLEWACRTAEGLGSDLLELYCGNGNFTLPLSRYFRQVLATEISKTSVSAAQWNIEANRIGNIKIARLSAEEFTEAYTGKREFKRLKDGGIALTDYAFSTIFVDPPRAGIDEETLKLVSQFDNIIYISCNPETLRANLDTLAETHAVERAALFDQFPFTHHIESGVLLKKKIL.

Positions 182, 210, 215, 231, and 293 each coordinate S-adenosyl-L-methionine. The active-site Nucleophile is the C318. E352 serves as the catalytic Proton acceptor.

Belongs to the class I-like SAM-binding methyltransferase superfamily. RNA M5U methyltransferase family. TrmA subfamily.

It carries out the reaction uridine(54) in tRNA + S-adenosyl-L-methionine = 5-methyluridine(54) in tRNA + S-adenosyl-L-homocysteine + H(+). The catalysed reaction is uridine(341) in tmRNA + S-adenosyl-L-methionine = 5-methyluridine(341) in tmRNA + S-adenosyl-L-homocysteine + H(+). Dual-specificity methyltransferase that catalyzes the formation of 5-methyluridine at position 54 (m5U54) in all tRNAs, and that of position 341 (m5U341) in tmRNA (transfer-mRNA). The protein is tRNA/tmRNA (uracil-C(5))-methyltransferase of Neisseria meningitidis serogroup B (strain ATCC BAA-335 / MC58).